The chain runs to 235 residues: Kinetochore protein Spc25 (235 aa).

A coiled-coil region spans residues Lys-44–Thr-106. Positions Glu-193–Asn-216 are disordered.

The protein belongs to the SPC25 family. In terms of assembly, component of the Ndc80 complex, which is composed of Ndc80, Nuf2 and Spc25.

Its subcellular location is the nucleus. The protein resides in the chromosome. It localises to the centromere. It is found in the kinetochore. Its function is as follows. Acts as a component of the essential kinetochore-associated Ndc80 complex, which is required for chromosome segregation and spindle checkpoint activity during meiosis and mitosis. Required for kinetochore integrity and the organization of stable microtubule binding sites in the outer plate of the kinetochore. Participates in SAC signaling that responds specifically to disruptions in spindle microtubule dynamics. The NDC80 complex synergistically enhances the affinity of the SKA1 complex for microtubules and may allow the NDC80 complex to track depolymerizing microtubules. The sequence is that of Kinetochore protein Spc25 from Drosophila pseudoobscura pseudoobscura (Fruit fly).